We begin with the raw amino-acid sequence, 183 residues long: Probable GTP-binding protein EngB (183 aa).

In terms of domain architecture, EngB-type G spans 17 to 183; it reads DYPEVVFVGR…KKELLSRILN (167 aa). GTP contacts are provided by residues 25-32, 51-55, 69-72, 137-140, and 166-168; these read GRSNVGKS, GRTRA, DVPG, TKID, and SSA. Mg(2+) is bound by residues Ser32 and Thr53.

Belongs to the TRAFAC class TrmE-Era-EngA-EngB-Septin-like GTPase superfamily. EngB GTPase family. Requires Mg(2+) as cofactor.

Functionally, necessary for normal cell division and for the maintenance of normal septation. The polypeptide is Probable GTP-binding protein EngB (Aquifex aeolicus (strain VF5)).